Consider the following 256-residue polypeptide: Non-specific lipid transfer protein GPI-anchored 23 (256 aa).

Residues 1–21 (MKPSFVLLSIVLLLSSSLSDA) form the signal peptide. An N-linked (GlcNAc...) asparagine glycan is attached at Asn41. 4 cysteine pairs are disulfide-bonded: Cys45/Cys88, Cys55/Cys72, Cys73/Cys113, and Cys86/Cys121. Residues 125-230 (TPAASTPVSP…SPSPSPSPSI (106 aa)) form a disordered region. Residues 138-230 (SPTTSPSSAK…SPSPSPSPSI (93 aa)) are compositionally biased toward low complexity. Ser225 carries the GPI-anchor amidated serine lipid modification. The propeptide at 226–256 (PSPSISSSGILLVSKLFIAVVMVSSFLYILA) is removed in mature form.

It belongs to the plant LTP family. As to expression, confined to the anthers of the inflorescence.

The protein localises to the cell membrane. Probable lipid transfer protein. The sequence is that of Non-specific lipid transfer protein GPI-anchored 23 from Arabidopsis thaliana (Mouse-ear cress).